Reading from the N-terminus, the 115-residue chain is Large ribosomal subunit protein bL19 (115 aa).

Belongs to the bacterial ribosomal protein bL19 family.

This protein is located at the 30S-50S ribosomal subunit interface and may play a role in the structure and function of the aminoacyl-tRNA binding site. The sequence is that of Large ribosomal subunit protein bL19 from Streptococcus gordonii (strain Challis / ATCC 35105 / BCRC 15272 / CH1 / DL1 / V288).